The chain runs to 68 residues: Copper transport protein ATOX1 (68 aa).

The HMA domain maps to 1–63 (MPKHEFSVDM…TLKKTGKTVS (63 aa)). Cu cation is bound by residues C12 and C15. S47 is subject to Phosphoserine. The residue at position 60 (K60) is an N6-acetyllysine.

The protein belongs to the ATX1 family. In terms of assembly, homodimer. Interacts with ATP7B. Interacts with ATP7A. Interacts (via dimer form) with SLC31A1 (via C-terminal domain); this interaction improves ATOX1 stability and controls intracellular Cu(I) levels. As to expression, ubiquitous.

Its function is as follows. Binds and deliver cytosolic copper to the copper ATPase proteins. May be important in cellular antioxidant defense. This Homo sapiens (Human) protein is Copper transport protein ATOX1.